A 482-amino-acid polypeptide reads, in one-letter code: MKFIIKLFPEITIKSKSVRQRFIKILQGNIRNVLRRFDDDARVRMDWDKLIVSSRNDQFREQAIEALACIPGIQAFLEVQASKFTDLHDIFEQVKAVWGDQLEGKTFCVRAKRHGKHEFSSLEVERYVGGGLNQHCVSNGVRLKNPDVKINLEIDGEELFIVSAIHQGLSGMPIATQEDVLSLISGGFDSGVASFQFIKRGCRVHYCFFNLGGAAHEIGVKQVAYHLWNRFGSSHRVRFTAVDFEPVVAEILEKIDNGQMGVVLKRMMMRAAAKVADEFQIPALVTGECVGQVSSQTLTNLNVIDRVTDKVILRPLITWDKPDIISEARRIGTLEFAETMPEYCGVISKKPTVKAELSRIEAEEENFDFAILDKVVAEARYLDIRRIGEETAAEVQEVETTAESGDNEVILDIRSMDEHNEKPLLVEGREVMHIPFFKLTTAFGDLPKEKTYLLYCDRGVMSKLQALYLKEKGFANVKVYRP.

One can recognise a THUMP domain in the interval 61–165; sequence EQAIEALACI…GEELFIVSAI (105 aa). ATP-binding positions include 183–184, Lys-265, Gly-287, and Gln-296; that span reads LI. A disulfide bridge links Cys-344 with Cys-456. Residues 404–482 form the Rhodanese domain; the sequence is SGDNEVILDI…GFANVKVYRP (79 aa). Cys-456 (cysteine persulfide intermediate) is an active-site residue.

This sequence belongs to the ThiI family.

It localises to the cytoplasm. The enzyme catalyses [ThiI sulfur-carrier protein]-S-sulfanyl-L-cysteine + a uridine in tRNA + 2 reduced [2Fe-2S]-[ferredoxin] + ATP + H(+) = [ThiI sulfur-carrier protein]-L-cysteine + a 4-thiouridine in tRNA + 2 oxidized [2Fe-2S]-[ferredoxin] + AMP + diphosphate. It catalyses the reaction [ThiS sulfur-carrier protein]-C-terminal Gly-Gly-AMP + S-sulfanyl-L-cysteinyl-[cysteine desulfurase] + AH2 = [ThiS sulfur-carrier protein]-C-terminal-Gly-aminoethanethioate + L-cysteinyl-[cysteine desulfurase] + A + AMP + 2 H(+). Its pathway is cofactor biosynthesis; thiamine diphosphate biosynthesis. Its function is as follows. Catalyzes the ATP-dependent transfer of a sulfur to tRNA to produce 4-thiouridine in position 8 of tRNAs, which functions as a near-UV photosensor. Also catalyzes the transfer of sulfur to the sulfur carrier protein ThiS, forming ThiS-thiocarboxylate. This is a step in the synthesis of thiazole, in the thiamine biosynthesis pathway. The sulfur is donated as persulfide by IscS. This chain is tRNA sulfurtransferase, found in Aeromonas hydrophila subsp. hydrophila (strain ATCC 7966 / DSM 30187 / BCRC 13018 / CCUG 14551 / JCM 1027 / KCTC 2358 / NCIMB 9240 / NCTC 8049).